Reading from the N-terminus, the 558-residue chain is Scarecrow-like protein 6 (558 aa).

Residues 19-90 form a disordered region; sequence FSSSFPQPPS…GGDATTDEQC (72 aa). Over residues 54–75 the composition is skewed to low complexity; sequence SVLDSLISPTSSSTVSSSHGGN. The GRAS domain maps to 196 to 554; that stretch reads KRLNPGPVGI…TELVGVSAWR (359 aa). The leucine repeat I (LRI) stretch occupies residues 203–257; sequence VGITEQLVKAAEVIESDTCLAQGILARLNQQLSSPVGKPLERAAFYFKEALNNLL. Residues 276-340 form a VHIID region; the sequence is YKSFSEISPV…DNAAPLSLKI (65 aa). The short motif at 307–311 is the VHIID element; the sequence is LHIID. Positions 356 to 388 are leucine repeat II (LRII); sequence FTQDNLKHFASEINISLDIQVLSLDLLGSISWP. The segment at 396–479 is PFYRE; that stretch reads VAVNISAASF…RFLIQPEIEK (84 aa). An SAW region spans residues 482–554; sequence LDRSRPIERP…TELVGVSAWR (73 aa).

This sequence belongs to the GRAS family. As to quaternary structure, interacts with Meloidogyne incognita 16D10. In terms of tissue distribution, expressed in seedlings, roots, leaves, flowers and siliques.

It is found in the nucleus. Functionally, probable transcription factor involved in plant development. The chain is Scarecrow-like protein 6 (SCL6) from Arabidopsis thaliana (Mouse-ear cress).